Reading from the N-terminus, the 549-residue chain is Cytoplasmic trehalase (549 aa).

Substrate-binding positions include Arg168, 175-176, Asn212, 221-223, 292-294, and Gly324; these read WD, RSQ, and RDE. Residues Asp326 and Glu509 each act as proton donor/acceptor in the active site. Glu525 is a binding site for substrate.

The protein belongs to the glycosyl hydrolase 37 family. In terms of assembly, monomer.

The protein localises to the cytoplasm. It carries out the reaction alpha,alpha-trehalose + H2O = alpha-D-glucose + beta-D-glucose. The protein operates within glycan degradation; trehalose degradation; D-glucose from alpha,alpha-trehalose: step 1/1. Its function is as follows. Hydrolyzes trehalose to glucose. Could be involved, in cells returning to low osmolarity conditions, in the utilization of the accumulated cytoplasmic trehalose, which was synthesized in response to high osmolarity. The chain is Cytoplasmic trehalase from Escherichia fergusonii (strain ATCC 35469 / DSM 13698 / CCUG 18766 / IAM 14443 / JCM 21226 / LMG 7866 / NBRC 102419 / NCTC 12128 / CDC 0568-73).